The following is a 1035-amino-acid chain: Isoleucine--tRNA ligase (1035 aa).

The 'HIGH' region signature appears at 48–58 (PTANGRPHVGH). Residues 589-593 (KMSKH) carry the 'KMSKS' region motif. Residue Lys592 participates in ATP binding.

It belongs to the class-I aminoacyl-tRNA synthetase family. IleS type 2 subfamily. Monomer. The cofactor is Zn(2+).

It is found in the cytoplasm. It carries out the reaction tRNA(Ile) + L-isoleucine + ATP = L-isoleucyl-tRNA(Ile) + AMP + diphosphate. In terms of biological role, catalyzes the attachment of isoleucine to tRNA(Ile). As IleRS can inadvertently accommodate and process structurally similar amino acids such as valine, to avoid such errors it has two additional distinct tRNA(Ile)-dependent editing activities. One activity is designated as 'pretransfer' editing and involves the hydrolysis of activated Val-AMP. The other activity is designated 'posttransfer' editing and involves deacylation of mischarged Val-tRNA(Ile). This is Isoleucine--tRNA ligase from Clostridium acetobutylicum (strain ATCC 824 / DSM 792 / JCM 1419 / IAM 19013 / LMG 5710 / NBRC 13948 / NRRL B-527 / VKM B-1787 / 2291 / W).